A 450-amino-acid chain; its full sequence is Phosphoglucosamine mutase (450 aa).

Catalysis depends on S107, which acts as the Phosphoserine intermediate. Mg(2+) is bound by residues S107, D246, D248, and D250. A Phosphoserine modification is found at S107.

It belongs to the phosphohexose mutase family. It depends on Mg(2+) as a cofactor. In terms of processing, activated by phosphorylation.

The enzyme catalyses alpha-D-glucosamine 1-phosphate = D-glucosamine 6-phosphate. In terms of biological role, catalyzes the conversion of glucosamine-6-phosphate to glucosamine-1-phosphate. The sequence is that of Phosphoglucosamine mutase from Aromatoleum aromaticum (strain DSM 19018 / LMG 30748 / EbN1) (Azoarcus sp. (strain EbN1)).